A 455-amino-acid chain; its full sequence is Ribulose bisphosphate carboxylase large chain (455 aa).

Position 5 is an N6,N6,N6-trimethyllysine (Lys-5). Substrate is bound by residues Asn-114 and Thr-164. The Proton acceptor role is filled by Lys-166. Lys-168 contacts substrate. Mg(2+) contacts are provided by Lys-192, Asp-194, and Glu-195. The residue at position 192 (Lys-192) is an N6-carboxylysine. Catalysis depends on His-285, which acts as the Proton acceptor. The substrate site is built by Arg-286, His-318, and Ser-370.

Belongs to the RuBisCO large chain family. Type I subfamily. Heterohexadecamer of 8 large chains and 8 small chains; disulfide-linked. The disulfide link is formed within the large subunit homodimers. Requires Mg(2+) as cofactor. In terms of processing, the disulfide bond which can form in the large chain dimeric partners within the hexadecamer appears to be associated with oxidative stress and protein turnover.

Its subcellular location is the plastid. The protein resides in the chloroplast. The catalysed reaction is 2 (2R)-3-phosphoglycerate + 2 H(+) = D-ribulose 1,5-bisphosphate + CO2 + H2O. It catalyses the reaction D-ribulose 1,5-bisphosphate + O2 = 2-phosphoglycolate + (2R)-3-phosphoglycerate + 2 H(+). In terms of biological role, ruBisCO catalyzes two reactions: the carboxylation of D-ribulose 1,5-bisphosphate, the primary event in carbon dioxide fixation, as well as the oxidative fragmentation of the pentose substrate in the photorespiration process. Both reactions occur simultaneously and in competition at the same active site. The polypeptide is Ribulose bisphosphate carboxylase large chain (Lupinus digitatus (Lupine)).